The chain runs to 670 residues: tRNA 5-methylaminomethyl-2-thiouridine biosynthesis bifunctional protein MnmC (670 aa).

A tRNA (mnm(5)s(2)U34)-methyltransferase region spans residues 1–245 (MKPIAIQPAS…KREMLTGALS (245 aa)). The FAD-dependent cmnm(5)s(2)U34 oxidoreductase stretch occupies residues 271 to 670 (VGGGIASALL…RKLLKGRAAS (400 aa)).

The protein in the N-terminal section; belongs to the methyltransferase superfamily. tRNA (mnm(5)s(2)U34)-methyltransferase family. This sequence in the C-terminal section; belongs to the DAO family. FAD serves as cofactor.

It is found in the cytoplasm. The catalysed reaction is 5-aminomethyl-2-thiouridine(34) in tRNA + S-adenosyl-L-methionine = 5-methylaminomethyl-2-thiouridine(34) in tRNA + S-adenosyl-L-homocysteine + H(+). Its function is as follows. Catalyzes the last two steps in the biosynthesis of 5-methylaminomethyl-2-thiouridine (mnm(5)s(2)U) at the wobble position (U34) in tRNA. Catalyzes the FAD-dependent demodification of cmnm(5)s(2)U34 to nm(5)s(2)U34, followed by the transfer of a methyl group from S-adenosyl-L-methionine to nm(5)s(2)U34, to form mnm(5)s(2)U34. The protein is tRNA 5-methylaminomethyl-2-thiouridine biosynthesis bifunctional protein MnmC of Cronobacter sakazakii (strain ATCC BAA-894) (Enterobacter sakazakii).